Consider the following 932-residue polypeptide: Transcription initiation factor TFIID subunit 3 (932 aa).

Disordered stretches follow at residues 130-201 (PIVS…LSTK), 213-347 (REPL…PSAM), 403-465 (REPD…DNSW), and 480-579 (LGAP…PWRE). Acidic residues predominate over residues 158–171 (LEEDDEMEEEEVIN). 4 positions are modified to phosphoserine: Ser-183, Ser-199, Ser-229, and Ser-243. At Lys-266 the chain carries N6-acetyllysine. Residues 266-283 (KSFTPKTKTKASSPGQKT) show a composition bias toward polar residues. A phosphoserine mark is found at Ser-291, Ser-297, and Ser-301. Positions 408-423 (FEFSSGSESEGDTFTS) are enriched in low complexity. Positions 436–446 (KASTSSNNFTK) are enriched in polar residues. Residues 447 to 461 (SLATPLPLSSGTSSS) show a composition bias toward low complexity. Thr-502 bears the Phosphothreonine mark. Basic and acidic residues predominate over residues 505–515 (PLHKGYEEKAK). Basic residues predominate over residues 524–538 (KKLKKELKTKLKKKE). Basic and acidic residues predominate over residues 539–579 (KQRDRERERERNKERSKEKDKMREREKEKEAGKELKYPWRE). Lys-582 participates in a covalent cross-link: Glycyl lysine isopeptide (Lys-Gly) (interchain with G-Cter in SUMO2). Positions 607–657 (KDGIVRREREKHKDKKKDRERSKREKDKRERERLKEKNREDKIKAPPTQLV) are disordered. The segment covering 623–650 (KDRERSKREKDKRERERLKEKNREDKIK) has biased composition (basic and acidic residues). Ser-669 is subject to Phosphoserine. Residues 681–746 (AFSPMLPEKL…EKEKEKHKHE (66 aa)) are disordered. Residues 689–702 (KLFEEKEKPKEKER) show a composition bias toward basic and acidic residues. The segment covering 703–714 (KKDKKEKKKKKE) has biased composition (basic residues). Residues 715–740 (KEKEKEKKEREREKERREREKREKEK) show a composition bias toward basic and acidic residues. Lys-749 participates in a covalent cross-link: Glycyl lysine isopeptide (Lys-Gly) (interchain with G-Cter in SUMO2). Residue Ser-758 is modified to Phosphoserine. Lys-779 carries the post-translational modification N6-acetyllysine. The PHD-type zinc-finger motif lies at 867–917 (IWICPGCNKPDDGSPMIGCDDCDDWYHWPCVGIMAAPPEEMQWFCPKCANK).

It belongs to the TAF3 family. Component of the TFIID basal transcription factor complex, composed of TATA-box-binding protein TBP, and a number of TBP-associated factors (TAFs), including TAF1, TAF2, TAF3, TAF4, TAF5, TAF6, TAF7, TAF8, TAF9, TAF10, TAF11, TAF12 and TAF13. Interacts with TAF10 via histone fold. Interacts with TAF13, TBP, SAP130 and GCN5L2. Interacts with TBPL2.

It localises to the nucleus. The TFIID basal transcription factor complex plays a major role in the initiation of RNA polymerase II (Pol II)-dependent transcription. TFIID recognizes and binds promoters with or without a TATA box via its subunit TBP, a TATA-box-binding protein, and promotes assembly of the pre-initiation complex (PIC). The TFIID complex consists of TBP and TBP-associated factors (TAFs), including TAF1, TAF2, TAF3, TAF4, TAF5, TAF6, TAF7, TAF8, TAF9, TAF10, TAF11, TAF12 and TAF13. The TFIID complex structure can be divided into 3 modules TFIID-A, TFIID-B, and TFIID-C. TAF3 forms the TFIID-A module together with TAF5 and TBP. Required in complex with TBPL2 for the differentiation of myoblasts into myocytes. The TAF3-TBPL2 complex replaces TFIID at specific promoters at an early stage in the differentiation process. This chain is Transcription initiation factor TFIID subunit 3 (Taf3), found in Mus musculus (Mouse).